Here is a 635-residue protein sequence, read N- to C-terminus: Beta-mannosyltransferase 2 (635 aa).

Residues 1 to 6 (MRTRLN) lie on the Cytoplasmic side of the membrane. A helical membrane pass occupies residues 7-27 (FLLLCIASVLSVIWIGVLLTW). The Extracellular segment spans residues 28 to 635 (NDNNLGGISL…EKKEAEKKGK (608 aa)). N-linked (GlcNAc...) asparagine glycosylation occurs at asparagine 484. The stretch at 512 to 635 (TRGEAERRRR…EKKEAEKKGK (124 aa)) forms a coiled coil. Residues 517–635 (ERRRRVAEER…EKKEAEKKGK (119 aa)) form a disordered region.

It belongs to the BMT family.

It is found in the membrane. In terms of biological role, beta-mannosyltransferase involved in cell wall biosynthesis. Initiates the beta-mannosylation of core N-linked glycans. The sequence is that of Beta-mannosyltransferase 2 (BMT2) from Komagataella phaffii (strain ATCC 76273 / CBS 7435 / CECT 11047 / NRRL Y-11430 / Wegner 21-1) (Yeast).